Consider the following 365-residue polypeptide: Putative F-box protein At1g31000 (365 aa).

Residues 15–62 (NDSDSVRIDIVIEIVKRLPLKDVSRFLLVSKLWSEIIRSPYFIRSFPF) enclose the F-box domain.

This Arabidopsis thaliana (Mouse-ear cress) protein is Putative F-box protein At1g31000.